We begin with the raw amino-acid sequence, 1026 residues long: Multidrug resistance protein MdtC (1026 aa).

The next 11 helical transmembrane spans lie at 16-36, 333-353, 360-380, 387-407, 435-455, 459-479, 528-548, 853-873, 897-917, 953-973, and 984-1004; these read LLALAITLVGLLGLRLLPVAP, EVEQSLAIAIALVILVVFLFL, LIPAVTVPVSLIGTCAAIYLC, LSLMALTIASGFVVDDAIVVL, VFSISLSLAAVFIPLLFMGGI, LFHEFAITLSASIAISLLIAL, WVLLTLLAVIGLNIWLYISIP, LLLILAAIATVYIVLGILYES, LFNAPFSLIALIGIMLLIGLV, PILMTTLAALFGALPLAFSYG, and ITIVGGLLVSQILTLYTTPVV.

Belongs to the resistance-nodulation-cell division (RND) (TC 2.A.6) family. MdtC subfamily. As to quaternary structure, part of a tripartite efflux system composed of MdtA, MdtB and MdtC. MdtC forms a heteromultimer with MdtB.

The protein localises to the cell inner membrane. The chain is Multidrug resistance protein MdtC from Edwardsiella ictaluri (strain 93-146).